We begin with the raw amino-acid sequence, 306 residues long: Peroxisome biogenesis factor 10 (306 aa).

Residues 1 to 52 (MHLSAHIDPLQIILCTEIDEACIQFIKSQIEGIARACGPRMQANFEGVLIPY) are Peroxisomal matrix-facing. Residues 53–84 (VDVLGKFLYRACCLRYATMGEEAARIVLAKQD) traverse the membrane as a helical segment. Residues 85–147 (RSKGLVLATT…PEAVISKEKH (63 aa)) lie on the Cytoplasmic side of the membrane. The helical transmembrane segment at 148–174 (LVYILNSFKPILLKLVSIIRFLCLTMK) threads the bilayer. Residues 175-202 (GHCATVSQLLLGLKYISLDEINPEEKKK) are Peroxisomal matrix-facing. Residues 203–219 (VLTLLLLLGSRLIASIL) traverse the membrane as a helical segment. Over 220 to 306 (QHSNSYFDQH…SSPSKIILLR (87 aa)) the chain is Cytoplasmic. Residues Cys-256, Cys-259, Cys-271, His-273, Cys-276, Cys-279, Cys-290, and Cys-293 each coordinate Zn(2+). The RING-type zinc-finger motif lies at 256–294 (CSLCMEFIHCPAATECGHIFCWSCINGWTSKKSECPLCR).

This sequence belongs to the pex2/pex10/pex12 family. In terms of assembly, component of the PEX2-PEX10-PEX12 retrotranslocation channel, composed of PEX2, PEX10 and PEX12.

The protein localises to the peroxisome membrane. The catalysed reaction is S-ubiquitinyl-[E2 ubiquitin-conjugating enzyme]-L-cysteine + [acceptor protein]-L-lysine = [E2 ubiquitin-conjugating enzyme]-L-cysteine + N(6)-ubiquitinyl-[acceptor protein]-L-lysine.. It participates in protein modification; protein ubiquitination. The E3 ubiquitin-protein ligase activity is stimulated by PEX12. Its function is as follows. E3 ubiquitin-protein ligase component of a retrotranslocation channel required for peroxisome organization by mediating export of the PEX5 receptor from peroxisomes to the cytosol, thereby promoting PEX5 recycling. The retrotranslocation channel is composed of PEX2, PEX10 and PEX12; each subunit contributing transmembrane segments that coassemble into an open channel that specifically allows the passage of PEX5 through the peroxisomal membrane. PEX10 also regulates PEX5 recycling by acting as a E3 ubiquitin-protein ligase. When PEX5 recycling is compromised, PEX10 catalyzes polyubiquitination of PEX5 during its passage through the retrotranslocation channel, leading to its degradation. In Schizosaccharomyces pombe (strain 972 / ATCC 24843) (Fission yeast), this protein is Peroxisome biogenesis factor 10 (pas4).